The sequence spans 369 residues: Aminomethyltransferase (369 aa).

It belongs to the GcvT family. As to quaternary structure, the glycine cleavage system is composed of four proteins: P, T, L and H.

It catalyses the reaction N(6)-[(R)-S(8)-aminomethyldihydrolipoyl]-L-lysyl-[protein] + (6S)-5,6,7,8-tetrahydrofolate = N(6)-[(R)-dihydrolipoyl]-L-lysyl-[protein] + (6R)-5,10-methylene-5,6,7,8-tetrahydrofolate + NH4(+). Functionally, the glycine cleavage system catalyzes the degradation of glycine. This is Aminomethyltransferase from Synechococcus sp. (strain WH7803).